The chain runs to 284 residues: Fructosamine kinase FrlD (284 aa).

It belongs to the carbohydrate kinase PfkB family.

Catalyzes the phosphorylation of a range of fructosamines to fructosamine 6-phosphates. The polypeptide is Fructosamine kinase FrlD (frlD) (Bacillus subtilis (strain 168)).